A 282-amino-acid polypeptide reads, in one-letter code: HTH-type transcriptional activator RhaR (282 aa).

The HTH araC/xylS-type domain maps to 179-277 (DKLITRLAAS…GMTPSQWRHL (99 aa)). DNA-binding regions (H-T-H motif) lie at residues 196–217 (DKFC…RQQT) and 244–267 (ISDI…TRET).

As to quaternary structure, binds DNA as a dimer.

Its subcellular location is the cytoplasm. In terms of biological role, activates expression of the rhaSR operon in response to L-rhamnose. The protein is HTH-type transcriptional activator RhaR of Shigella flexneri serotype 5b (strain 8401).